The chain runs to 228 residues: Putative adhesin A1I_01215 (228 aa).

The signal sequence occupies residues methionine 1–alanine 22.

The protein is Putative adhesin A1I_01215 of Rickettsia bellii (strain OSU 85-389).